A 242-amino-acid chain; its full sequence is Venom nerve growth factor (242 aa).

The first 18 residues, 1-18 (MSMMCYTLIIAFLIGIWA), serve as a signal peptide directing secretion. A propeptide spanning residues 19–125 (APKSEDNVPL…TLNRNIRAKR (107 aa)) is cleaved from the precursor. Positions 47–66 (GLKTSRNTDQRHPAPKKAED) are enriched in basic and acidic residues. The segment at 47-70 (GLKTSRNTDQRHPAPKKAEDQELG) is disordered. Intrachain disulfides connect Cys-139–Cys-203, Cys-181–Cys-231, and Cys-191–Cys-233. A glycan (N-linked (GlcNAc...) asparagine) is linked at Asn-166.

This sequence belongs to the NGF-beta family. In terms of assembly, homodimer; non-covalently linked. As to expression, expressed by the venom gland.

The protein localises to the secreted. Functionally, nerve growth factor is important for the development and maintenance of the sympathetic and sensory nervous systems. It stimulates division and differentiation of sympathetic and embryonic sensory neurons as well as basal forebrain cholinergic neurons in the brain. Its relevance in the snake venom is not clear. However, it has been shown to inhibit metalloproteinase-dependent proteolysis of platelet glycoprotein Ib alpha, suggesting a metalloproteinase inhibition to prevent metalloprotease autodigestion and/or protection against prey proteases. Binds a lipid between the two protein chains in the homodimer. The lipid-bound form promotes histamine relase from mouse mast cells, contrary to the lipid-free form. This Drysdalia coronoides (White-lipped snake) protein is Venom nerve growth factor.